Here is a 183-residue protein sequence, read N- to C-terminus: Acireductone dioxygenase (183 aa).

Fe(2+) contacts are provided by His99, His101, Glu105, and His144. Ni(2+) is bound by residues His99, His101, Glu105, and His144.

It belongs to the acireductone dioxygenase (ARD) family. As to quaternary structure, monomer. The cofactor is Fe(2+). Requires Ni(2+) as cofactor.

The catalysed reaction is 1,2-dihydroxy-5-(methylsulfanyl)pent-1-en-3-one + O2 = 3-(methylsulfanyl)propanoate + CO + formate + 2 H(+). The enzyme catalyses 1,2-dihydroxy-5-(methylsulfanyl)pent-1-en-3-one + O2 = 4-methylsulfanyl-2-oxobutanoate + formate + 2 H(+). It functions in the pathway amino-acid biosynthesis; L-methionine biosynthesis via salvage pathway; L-methionine from S-methyl-5-thio-alpha-D-ribose 1-phosphate: step 5/6. In terms of biological role, catalyzes 2 different reactions between oxygen and the acireductone 1,2-dihydroxy-3-keto-5-methylthiopentene (DHK-MTPene) depending upon the metal bound in the active site. Fe-containing acireductone dioxygenase (Fe-ARD) produces formate and 2-keto-4-methylthiobutyrate (KMTB), the alpha-ketoacid precursor of methionine in the methionine recycle pathway. Ni-containing acireductone dioxygenase (Ni-ARD) produces methylthiopropionate, carbon monoxide and formate, and does not lie on the methionine recycle pathway. The polypeptide is Acireductone dioxygenase (Microcystis aeruginosa (strain NIES-843 / IAM M-2473)).